Here is a 192-residue protein sequence, read N- to C-terminus: BREX protein BrxB (192 aa).

This sequence belongs to the BrxB family.

Its function is as follows. BREX systems (bacteriophage exclusion) provide immunity against bacteriophage. Part of a type 1 BREX system. This system allows phage adsorption but prevents phage DNA replication, without degradation of the phage DNA. Methylation of bacterial DNA by PglX probably guides self/non-self discrimination. When the brxA-brxB-brxC-pglX and pglZ-brxL operons are transformed into a susceptible B.subtilis strain (BEST7003) they confer resistance to bacteriophages SPbeta, SP16, Zeta, phi3T and SP02 and partial protection to phages SP01 and SP82G (these include lytic and temperate phage). They do not protect against phages phi105, rho10 or rho14. Additionally confers a very slight reduction in efficiency of plasmid transformation. The protein is BREX protein BrxB of Bacillus cereus (strain H3081.97).